The following is a 175-amino-acid chain: ATP-dependent protease subunit HslV (175 aa).

The active site involves T5. Residues G160, D163, and T166 each coordinate Na(+).

The protein belongs to the peptidase T1B family. HslV subfamily. As to quaternary structure, a double ring-shaped homohexamer of HslV is capped on each side by a ring-shaped HslU homohexamer. The assembly of the HslU/HslV complex is dependent on binding of ATP.

It is found in the cytoplasm. It carries out the reaction ATP-dependent cleavage of peptide bonds with broad specificity.. With respect to regulation, allosterically activated by HslU binding. Its function is as follows. Protease subunit of a proteasome-like degradation complex believed to be a general protein degrading machinery. This chain is ATP-dependent protease subunit HslV, found in Myxococcus xanthus.